The primary structure comprises 505 residues: Glycerol kinase (505 aa).

Residue Thr-17 participates in ADP binding. Positions 17, 18, and 19 each coordinate ATP. A sn-glycerol 3-phosphate-binding site is contributed by Thr-17. An ADP-binding site is contributed by Arg-21. Arg-87, Glu-88, Tyr-139, and Asp-250 together coordinate sn-glycerol 3-phosphate. Residues Arg-87, Glu-88, Tyr-139, Asp-250, and Gln-251 each contribute to the glycerol site. The ADP site is built by Thr-272 and Gly-315. Thr-272, Gly-315, Gln-319, and Gly-416 together coordinate ATP. ADP-binding residues include Gly-416 and Asn-420.

It belongs to the FGGY kinase family.

It carries out the reaction glycerol + ATP = sn-glycerol 3-phosphate + ADP + H(+). The protein operates within polyol metabolism; glycerol degradation via glycerol kinase pathway; sn-glycerol 3-phosphate from glycerol: step 1/1. With respect to regulation, inhibited by fructose 1,6-bisphosphate (FBP). In terms of biological role, key enzyme in the regulation of glycerol uptake and metabolism. Catalyzes the phosphorylation of glycerol to yield sn-glycerol 3-phosphate. This Azotobacter vinelandii (strain DJ / ATCC BAA-1303) protein is Glycerol kinase.